Here is a 454-residue protein sequence, read N- to C-terminus: Serine/threonine-protein kinase NLK2 (454 aa).

Residues 67–356 enclose the Protein kinase domain; it reads PEPDRPIGYG…AKDALAHPYL (290 aa). ATP-binding positions include 73 to 81 and lysine 96; that span reads IGYGAFGVV. The active-site Proton acceptor is the aspartate 193.

Belongs to the protein kinase superfamily. CMGC Ser/Thr protein kinase family. MAP kinase subfamily. In terms of assembly, interacts with sox11, hmgxb4/hmg2l1, rnf138/narf, stat3.1 and mef2a. Mg(2+) is required as a cofactor.

The protein resides in the nucleus. It localises to the cytoplasm. The catalysed reaction is L-seryl-[protein] + ATP = O-phospho-L-seryl-[protein] + ADP + H(+). The enzyme catalyses L-threonyl-[protein] + ATP = O-phospho-L-threonyl-[protein] + ADP + H(+). Activated by tyrosine and threonine phosphorylation. In terms of biological role, negatively regulates Wnt/beta-catenin-signaling during development. Plays a role together with sox11 in neural induction during early embryogenesis. Involved in TGFbeta-mediated mesoderm induction in early embryos, acting downstream of map3k7/tak1 to phosphorylate stat3. Augments the rnf138/narf-directed ubiquitination and degradation of tcf/lef by enhancing the association of rnf138/narf and tcf/lef. Phosphorylates mef2a to play a role in anterior neural development, including eye formation. The sequence is that of Serine/threonine-protein kinase NLK2 (nlk.2) from Xenopus tropicalis (Western clawed frog).